Consider the following 45-residue polypeptide: Metallothionein-like protein 1A (45 aa).

This sequence belongs to the metallothionein superfamily. Type 15 family. Expressed in phloem and mesophyll cells of leaves, vascular tissues of cotyledons, sepals and petals. Expressed in anthers. Expressed in root endodermis and at lower levels in cortex of mature region of roots.

In terms of biological role, metallothioneins have a high content of cysteine residues that bind various heavy metals. Functions as a metal chelator of copper (Cu) and zinc (Zn). Plays a role in Cu homeostasis in the roots under elevated Cu concentration. Functions cooperatively with the phytochelatin synthase PCS1 to protect plants from Cu and cadmium (Cd) toxicity. Plays a role in Cu homeostasis, specifically in the remobilization of Cu from senescing leaves. The mobilization of Cu from internal sources is important for seed development. Confers tolerance to Cd and plays a role in Cd and Zn homeostasis. The polypeptide is Metallothionein-like protein 1A (MT1A) (Arabidopsis thaliana (Mouse-ear cress)).